A 331-amino-acid polypeptide reads, in one-letter code: Adenosine deaminase (331 aa).

The Zn(2+) site is built by His-12 and His-14. Substrate contacts are provided by His-14, Asp-16, and Gly-170. His-197 contributes to the Zn(2+) binding site. Glu-200 acts as the Proton donor in catalysis. Asp-278 lines the Zn(2+) pocket. Position 279 (Asp-279) interacts with substrate.

Belongs to the metallo-dependent hydrolases superfamily. Adenosine and AMP deaminases family. Adenosine deaminase subfamily. Zn(2+) is required as a cofactor.

The enzyme catalyses adenosine + H2O + H(+) = inosine + NH4(+). It carries out the reaction 2'-deoxyadenosine + H2O + H(+) = 2'-deoxyinosine + NH4(+). Its function is as follows. Catalyzes the hydrolytic deamination of adenosine and 2-deoxyadenosine. The sequence is that of Adenosine deaminase from Shewanella sp. (strain MR-7).